The following is a 125-amino-acid chain: Holo-[acyl-carrier-protein] synthase (125 aa).

Mg(2+) is bound by residues aspartate 8 and glutamate 57.

It belongs to the P-Pant transferase superfamily. AcpS family. Mg(2+) is required as a cofactor.

It is found in the cytoplasm. It carries out the reaction apo-[ACP] + CoA = holo-[ACP] + adenosine 3',5'-bisphosphate + H(+). In terms of biological role, transfers the 4'-phosphopantetheine moiety from coenzyme A to a Ser of acyl-carrier-protein. The polypeptide is Holo-[acyl-carrier-protein] synthase (Nitrosospira multiformis (strain ATCC 25196 / NCIMB 11849 / C 71)).